The primary structure comprises 99 residues: Aspartyl/glutamyl-tRNA(Asn/Gln) amidotransferase subunit C (99 aa).

The protein belongs to the GatC family. In terms of assembly, heterotrimer of A, B and C subunits.

The catalysed reaction is L-glutamyl-tRNA(Gln) + L-glutamine + ATP + H2O = L-glutaminyl-tRNA(Gln) + L-glutamate + ADP + phosphate + H(+). The enzyme catalyses L-aspartyl-tRNA(Asn) + L-glutamine + ATP + H2O = L-asparaginyl-tRNA(Asn) + L-glutamate + ADP + phosphate + 2 H(+). Its function is as follows. Allows the formation of correctly charged Asn-tRNA(Asn) or Gln-tRNA(Gln) through the transamidation of misacylated Asp-tRNA(Asn) or Glu-tRNA(Gln) in organisms which lack either or both of asparaginyl-tRNA or glutaminyl-tRNA synthetases. The reaction takes place in the presence of glutamine and ATP through an activated phospho-Asp-tRNA(Asn) or phospho-Glu-tRNA(Gln). This is Aspartyl/glutamyl-tRNA(Asn/Gln) amidotransferase subunit C from Corynebacterium efficiens (strain DSM 44549 / YS-314 / AJ 12310 / JCM 11189 / NBRC 100395).